We begin with the raw amino-acid sequence, 132 residues long: MDHHIPMHALPEEIQKMLPEEKVCKYCGVSYLILHEFKAMEEKVKAMEKEMKFYQGSVDREKRLQEKLHSLSQELEQYKIDNKSKTERIYDVGMQLKSQQNEFQKVKKQLSHLQDELKIKYRQSYIFRLCFC.

The stretch at 37–116 (FKAMEEKVKA…KKQLSHLQDE (80 aa)) forms a coiled coil.

This Homo sapiens (Human) protein is Protein LEKR1 (LEKR1).